We begin with the raw amino-acid sequence, 45 residues long: Large ribosomal subunit protein bL34 (45 aa).

The protein belongs to the bacterial ribosomal protein bL34 family.

This is Large ribosomal subunit protein bL34 (rpmH) from Streptomyces bikiniensis.